The following is a 559-amino-acid chain: Glypican-1 (559 aa).

The N-terminal stretch at 1-23 (MELRARGWWLLYAAAVLVACARG) is a signal peptide. 7 disulfide bridges follow: Cys-32/Cys-68, Cys-62/Cys-256, Cys-69/Cys-259, Cys-191/Cys-343, Cys-246/Cys-279, Cys-268/Cys-415, and Cys-272/Cys-401. Residues Asn-79 and Asn-116 are each glycosylated (N-linked (GlcNAc...) asparagine). Residues 478-539 (FQDASDDGSG…SAAAPTPPQA (62 aa)) form a disordered region. O-linked (Xyl...) (heparan sulfate) serine glycans are attached at residues Ser-486, Ser-488, and Ser-490. Ser-530 carries GPI-anchor amidated serine lipidation. Positions 531–559 (AAAPTPPQASPLLLLGLALALPAVAPRGR) are cleaved as a propeptide — removed in mature form.

This sequence belongs to the glypican family. S-nitrosylated in a Cu(2+)-dependent manner. Nitric acid (NO) is released from the nitrosylated cysteines by ascorbate or by some other reducing agent, in a Cu(2+) or Zn(2+) dependent manner. This free nitric oxide is then capable of cleaving the heparan sulfate side chains. In terms of processing, N- and O-glycosylated. N-glycosylation is mainly of the complex type containing sialic acid. O-glycosylated with heparan sulfate. The heparan sulfate chains can be cleaved either by the action of heparanase or, degraded by a deaminative process that uses nitric oxide (NO) released from the S-nitrosylated cysteines. This process is triggered by ascorbate, or by some other reducing agent, in a Cu(2+)- or Zn(2+) dependent manner. Cu(2+) ions are provided by ceruloproteins such as APP, PRNP or CP which associate with GCP1 in intracellular compartments or lipid rafts. Post-translationally, shed from the cell surface probably by further cleavage.

The protein localises to the cell membrane. The protein resides in the endosome. It localises to the secreted. Its subcellular location is the extracellular space. Cell surface proteoglycan that bears heparan sulfate. Binds, via the heparan sulfate side chains, alpha-4 (V) collagen and participates in Schwann cell myelination. May act as a catalyst in increasing the rate of conversion of prion protein PRPN (C) to PRNP (Sc) via associating (via the heparan sulfate side chains) with both forms of PRPN, targeting them to lipid rafts and facilitating their interaction. Required for proper skeletal muscle differentiation by sequestering FGF2 in lipid rafts preventing its binding to receptors (FGFRs) and inhibiting the FGF-mediated signaling. The polypeptide is Glypican-1 (GPC1) (Bos taurus (Bovine)).